A 294-amino-acid polypeptide reads, in one-letter code: Elongation factor Ts (294 aa).

Residues 78 to 81 form an involved in Mg(2+) ion dislocation from EF-Tu region; it reads TDFV.

This sequence belongs to the EF-Ts family.

Its subcellular location is the cytoplasm. Its function is as follows. Associates with the EF-Tu.GDP complex and induces the exchange of GDP to GTP. It remains bound to the aminoacyl-tRNA.EF-Tu.GTP complex up to the GTP hydrolysis stage on the ribosome. The sequence is that of Elongation factor Ts from Mycoplasma mobile (strain ATCC 43663 / 163K / NCTC 11711) (Mesomycoplasma mobile).